The primary structure comprises 719 residues: Potassium channel KOR2 (719 aa).

Residues 1–63 (MAEEYELNEI…VIHPNGRWYR (63 aa)) lie on the Cytoplasmic side of the membrane. The chain crosses the membrane as a helical span at residues 64–84 (IWANMMFLWSIYSTFFTPFEF). The Extracellular segment spans residues 85 to 93 (SFFRGLPDQ). The chain crosses the membrane as a helical span at residues 94-114 (LLDLECVQLVFLADVAVHFFL). Over 115-137 (AYRDPHTYRMVHDKRHIALRYIK) the chain is Cytoplasmic. A helical membrane pass occupies residues 138–158 (GSFALDVLGCFPWDAIYKVTG). The Extracellular portion of the chain corresponds to 159-164 (RVEAVR). A helical; Voltage-sensor transmembrane segment spans residues 165–185 (WLVWVRLYRGRKVMAFFKRVE). Over 186–199 (KDIRVSYLLTRIVK) the chain is Cytoplasmic. A helical transmembrane segment spans residues 200–220 (LITVELYCTHTAACGFYYLAT). Residues 221-255 (TLPPAREGGTWIGSLSLGDARYINFREVDLLTRYV) lie on the Extracellular side of the membrane. The pore-forming intramembrane region spans 256-275 (TSLYLAIVTMATVGYGDIHA). The Extracellular segment spans residues 276-285 (VNTREMAFTV). A helical membrane pass occupies residues 286 to 306 (VYISFSIVLSAYLIGNMTALI). Residues 307 to 719 (VKGSRTERFR…LEQARTVATN (413 aa)) are Cytoplasmic-facing. 383 to 503 (LFRGCSDDFL…SQILSNLLKG (121 aa)) lines the a nucleoside 3',5'-cyclic phosphate pocket. ANK repeat units lie at residues 523-556 (KQES…DPSK), 560-589 (DGRT…NVNS), 593-622 (FGNS…ILNL), 624-653 (DAGG…SPNC), and 657-686 (DQRT…DIQA).

Belongs to the potassium channel family. Plant (TC 1.A.1.4) subfamily.

The protein localises to the membrane. Its function is as follows. Probable outward-rectifying potassium channel. The chain is Potassium channel KOR2 from Oryza sativa subsp. japonica (Rice).